Reading from the N-terminus, the 178-residue chain is Large ribosomal subunit protein uL5 (178 aa).

The residue at position 2 (Ala2) is an N-acetylalanine. Lys38 participates in a covalent cross-link: Glycyl lysine isopeptide (Lys-Gly) (interchain with G-Cter in SUMO2). 2 positions are modified to phosphothreonine: Thr44 and Thr47. An N6-acetyllysine; alternate modification is found at Lys52. A Glycyl lysine isopeptide (Lys-Gly) (interchain with G-Cter in SUMO2); alternate cross-link involves residue Lys52. Lys85 is modified (N6-acetyllysine). Lys154 is covalently cross-linked (Glycyl lysine isopeptide (Lys-Gly) (interchain with G-Cter in SUMO2)).

The protein belongs to the universal ribosomal protein uL5 family. Component of the large ribosomal subunit (LSU). Part of the 5S RNP complex, which is a LSU subcomplex composed of the 5S RNA, RPL5 and RPL11. Component of a hexameric 5S RNP precursor complex, composed of 5S RNA, RRS1, RPF2/BXDC1, RPL5, RPL11 and HEATR3; this complex acts as a precursor for ribosome assembly. Interacts with PML. Interacts with MDM2 (via its RanBP2-type zinc finger domain); negatively regulates MDM2-mediated TP53 ubiquitination and degradation. Interacts with NOP53; retains RPL11 into the nucleolus.

The protein localises to the nucleus. It is found in the nucleolus. The protein resides in the cytoplasm. Functionally, component of the ribosome, a large ribonucleoprotein complex responsible for the synthesis of proteins in the cell. The small ribosomal subunit (SSU) binds messenger RNAs (mRNAs) and translates the encoded message by selecting cognate aminoacyl-transfer RNA (tRNA) molecules. The large subunit (LSU) contains the ribosomal catalytic site termed the peptidyl transferase center (PTC), which catalyzes the formation of peptide bonds, thereby polymerizing the amino acids delivered by tRNAs into a polypeptide chain. The nascent polypeptides leave the ribosome through a tunnel in the LSU and interact with protein factors that function in enzymatic processing, targeting, and the membrane insertion of nascent chains at the exit of the ribosomal tunnel. As part of the 5S RNP/5S ribonucleoprotein particle it is an essential component of the LSU, required for its formation and the maturation of rRNAs. It also couples ribosome biogenesis to p53/TP53 activation. As part of the 5S RNP it accumulates in the nucleoplasm and inhibits MDM2, when ribosome biogenesis is perturbed, mediating the stabilization and the activation of TP53. Promotes nucleolar location of PML. The chain is Large ribosomal subunit protein uL5 (RPL11) from Oryctolagus cuniculus (Rabbit).